We begin with the raw amino-acid sequence, 388 residues long: Succinate--CoA ligase [ADP-forming] subunit beta (388 aa).

Residues 9–245 form the ATP-grasp domain; sequence KELLKSYGLP…KSQENERELK (237 aa). ATP contacts are provided by residues Lys46, 53 to 55, Glu100, Tyr103, and Glu108; that span reads GRG. Asn200 and Asp214 together coordinate Mg(2+). Substrate contacts are provided by residues Asn265 and 322–324; that span reads GIV.

The protein belongs to the succinate/malate CoA ligase beta subunit family. As to quaternary structure, heterotetramer of two alpha and two beta subunits. It depends on Mg(2+) as a cofactor.

The enzyme catalyses succinate + ATP + CoA = succinyl-CoA + ADP + phosphate. It carries out the reaction GTP + succinate + CoA = succinyl-CoA + GDP + phosphate. It participates in carbohydrate metabolism; tricarboxylic acid cycle; succinate from succinyl-CoA (ligase route): step 1/1. Succinyl-CoA synthetase functions in the citric acid cycle (TCA), coupling the hydrolysis of succinyl-CoA to the synthesis of either ATP or GTP and thus represents the only step of substrate-level phosphorylation in the TCA. The beta subunit provides nucleotide specificity of the enzyme and binds the substrate succinate, while the binding sites for coenzyme A and phosphate are found in the alpha subunit. In Psychrobacter cryohalolentis (strain ATCC BAA-1226 / DSM 17306 / VKM B-2378 / K5), this protein is Succinate--CoA ligase [ADP-forming] subunit beta.